The primary structure comprises 247 residues: Uridylate kinase (247 aa).

Residue 16–19 coordinates ATP; the sequence is KLSG. Glycine 58 lines the UMP pocket. ATP contacts are provided by glycine 59 and arginine 63. UMP contacts are provided by residues aspartate 78 and 139–146; that span reads TGNPFFTT. The ATP site is built by threonine 166, tyrosine 172, and aspartate 175.

This sequence belongs to the UMP kinase family. Homohexamer.

It is found in the cytoplasm. It catalyses the reaction UMP + ATP = UDP + ADP. It functions in the pathway pyrimidine metabolism; CTP biosynthesis via de novo pathway; UDP from UMP (UMPK route): step 1/1. Its activity is regulated as follows. Inhibited by UTP. In terms of biological role, catalyzes the reversible phosphorylation of UMP to UDP. This is Uridylate kinase from Xylella fastidiosa (strain Temecula1 / ATCC 700964).